A 271-amino-acid polypeptide reads, in one-letter code: S-adenosylmethionine decarboxylase proenzyme (271 aa).

Ser-121 serves as the catalytic Schiff-base intermediate with substrate; via pyruvic acid. Ser-121 carries the post-translational modification Pyruvic acid (Ser); by autocatalysis. His-126 serves as the catalytic Proton acceptor; for processing activity. Cys-149 serves as the catalytic Proton donor; for catalytic activity.

Belongs to the prokaryotic AdoMetDC family. Type 2 subfamily. In terms of assembly, heterooctamer of four alpha and four beta chains arranged as a tetramer of alpha/beta heterodimers. It depends on pyruvate as a cofactor. Is synthesized initially as an inactive proenzyme. Formation of the active enzyme involves a self-maturation process in which the active site pyruvoyl group is generated from an internal serine residue via an autocatalytic post-translational modification. Two non-identical subunits are generated from the proenzyme in this reaction, and the pyruvate is formed at the N-terminus of the alpha chain, which is derived from the carboxyl end of the proenzyme. The post-translation cleavage follows an unusual pathway, termed non-hydrolytic serinolysis, in which the side chain hydroxyl group of the serine supplies its oxygen atom to form the C-terminus of the beta chain, while the remainder of the serine residue undergoes an oxidative deamination to produce ammonia and the pyruvoyl group blocking the N-terminus of the alpha chain.

The enzyme catalyses S-adenosyl-L-methionine + H(+) = S-adenosyl 3-(methylsulfanyl)propylamine + CO2. Its pathway is amine and polyamine biosynthesis; S-adenosylmethioninamine biosynthesis; S-adenosylmethioninamine from S-adenosyl-L-methionine: step 1/1. Functionally, catalyzes the decarboxylation of S-adenosylmethionine to S-adenosylmethioninamine (dcAdoMet), the propylamine donor required for the synthesis of the polyamines spermine and spermidine from the diamine putrescine. The polypeptide is S-adenosylmethionine decarboxylase proenzyme (Clostridium perfringens (strain SM101 / Type A)).